The sequence spans 200 residues: UPF0301 protein BruAb1_0502 (200 aa).

The protein belongs to the UPF0301 (AlgH) family.

The chain is UPF0301 protein BruAb1_0502 from Brucella abortus biovar 1 (strain 9-941).